Reading from the N-terminus, the 109-residue chain is Cytochrome c oxidase subunit 6A1, mitochondrial (109 aa).

The transit peptide at 1–24 directs the protein to the mitochondrion; it reads MAAAAGSRVFGLLGRSRLQLSRCM. Residues 25–34 are Mitochondrial matrix-facing; sequence SSGAHGEEGS. The helical transmembrane segment at 35–59 threads the bilayer; that stretch reads ARMWKALTYFVALPGVGVSMLNVFL. The Mitochondrial intermembrane segment spans residues 60 to 109; the sequence is KSHHGEEERPEFVAYPHLRIRSKPFPWGDGNHTLFHNPHVNPLPTGYEDE.

The protein belongs to the cytochrome c oxidase subunit 6A family. Component of the cytochrome c oxidase (complex IV, CIV), a multisubunit enzyme composed of 14 subunits. The complex is composed of a catalytic core of 3 subunits MT-CO1, MT-CO2 and MT-CO3, encoded in the mitochondrial DNA, and 11 supernumerary subunits COX4I1 (or COX4I2), COX5A, COX5B, COX6A2 (or COX6A1), COX6B1 (or COX6B2), COX6C, COX7A1 (or COX7A2), COX7B, COX7C, COX8B and NDUFA4, which are encoded in the nuclear genome. The complex exists as a monomer or a dimer and forms supercomplexes (SCs) in the inner mitochondrial membrane with NADH-ubiquinone oxidoreductase (complex I, CI) and ubiquinol-cytochrome c oxidoreductase (cytochrome b-c1 complex, complex III, CIII), resulting in different assemblies (supercomplex SCI(1)III(2)IV(1) and megacomplex MCI(2)III(2)IV(2)).

The protein localises to the mitochondrion inner membrane. It functions in the pathway energy metabolism; oxidative phosphorylation. Component of the cytochrome c oxidase, the last enzyme in the mitochondrial electron transport chain which drives oxidative phosphorylation. The respiratory chain contains 3 multisubunit complexes succinate dehydrogenase (complex II, CII), ubiquinol-cytochrome c oxidoreductase (cytochrome b-c1 complex, complex III, CIII) and cytochrome c oxidase (complex IV, CIV), that cooperate to transfer electrons derived from NADH and succinate to molecular oxygen, creating an electrochemical gradient over the inner membrane that drives transmembrane transport and the ATP synthase. Cytochrome c oxidase is the component of the respiratory chain that catalyzes the reduction of oxygen to water. Electrons originating from reduced cytochrome c in the intermembrane space (IMS) are transferred via the dinuclear copper A center (CU(A)) of subunit 2 and heme A of subunit 1 to the active site in subunit 1, a binuclear center (BNC) formed by heme A3 and copper B (CU(B)). The BNC reduces molecular oxygen to 2 water molecules unsing 4 electrons from cytochrome c in the IMS and 4 protons from the mitochondrial matrix. The sequence is that of Cytochrome c oxidase subunit 6A1, mitochondrial (COX6A1) from Bos taurus (Bovine).